We begin with the raw amino-acid sequence, 61 residues long: Large ribosomal subunit protein bL32 (61 aa).

A compositionally biased stretch (basic residues) spans 1–16 (MAVPKKKTSKSRKNMR). The tract at residues 1-20 (MAVPKKKTSKSRKNMRRAHD) is disordered.

The protein belongs to the bacterial ribosomal protein bL32 family.

The protein is Large ribosomal subunit protein bL32 of Trichlorobacter lovleyi (strain ATCC BAA-1151 / DSM 17278 / SZ) (Geobacter lovleyi).